Consider the following 545-residue polypeptide: Membrane protein insertase YidC (545 aa).

A helical membrane pass occupies residues 6–26 (FVLFVFFIFLSFLLWEQWQID). The interval 32–69 (QAVAQTDGASRPAGDLPQRPSDDESDVTVHTEAPTQEG) is disordered. The next 4 helical transmembrane spans lie at 354–374 (FFNNWGWAIIFVTLVIKALFF), 425–445 (GGCLPILVQIPVFISLYWVLV), 462–482 (LSSKDPYFVLPLIMGVSMFIQ), and 500–520 (FFPLVFTVFFLFFPSGLVLYW).

It belongs to the OXA1/ALB3/YidC family. Type 1 subfamily. Interacts with the Sec translocase complex via SecD. Specifically interacts with transmembrane segments of nascent integral membrane proteins during membrane integration.

It localises to the cell inner membrane. Its function is as follows. Required for the insertion and/or proper folding and/or complex formation of integral membrane proteins into the membrane. Involved in integration of membrane proteins that insert both dependently and independently of the Sec translocase complex, as well as at least some lipoproteins. Aids folding of multispanning membrane proteins. This is Membrane protein insertase YidC from Methylococcus capsulatus (strain ATCC 33009 / NCIMB 11132 / Bath).